Consider the following 125-residue polypeptide: Small ribosomal subunit protein uS13 (125 aa).

The tract at residues 90-125 (TRHRRGLPVRGQRTHTNARTKKGPRRAIAGKKKVTK) is disordered.

It belongs to the universal ribosomal protein uS13 family. In terms of assembly, part of the 30S ribosomal subunit. Forms a loose heterodimer with protein S19. Forms two bridges to the 50S subunit in the 70S ribosome.

Functionally, located at the top of the head of the 30S subunit, it contacts several helices of the 16S rRNA. In the 70S ribosome it contacts the 23S rRNA (bridge B1a) and protein L5 of the 50S subunit (bridge B1b), connecting the 2 subunits; these bridges are implicated in subunit movement. Contacts the tRNAs in the A and P-sites. The chain is Small ribosomal subunit protein uS13 from Gemmatimonas aurantiaca (strain DSM 14586 / JCM 11422 / NBRC 100505 / T-27).